A 154-amino-acid polypeptide reads, in one-letter code: 6,7-dimethyl-8-ribityllumazine synthase (154 aa).

5-amino-6-(D-ribitylamino)uracil-binding positions include Phe-22, 56–58 (AFE), and 80–82 (AVI). 85 to 86 (AT) contributes to the (2S)-2-hydroxy-3-oxobutyl phosphate binding site. His-88 functions as the Proton donor in the catalytic mechanism. Phe-113 is a 5-amino-6-(D-ribitylamino)uracil binding site. Arg-127 contributes to the (2S)-2-hydroxy-3-oxobutyl phosphate binding site.

This sequence belongs to the DMRL synthase family.

It catalyses the reaction (2S)-2-hydroxy-3-oxobutyl phosphate + 5-amino-6-(D-ribitylamino)uracil = 6,7-dimethyl-8-(1-D-ribityl)lumazine + phosphate + 2 H2O + H(+). The protein operates within cofactor biosynthesis; riboflavin biosynthesis; riboflavin from 2-hydroxy-3-oxobutyl phosphate and 5-amino-6-(D-ribitylamino)uracil: step 1/2. Catalyzes the formation of 6,7-dimethyl-8-ribityllumazine by condensation of 5-amino-6-(D-ribitylamino)uracil with 3,4-dihydroxy-2-butanone 4-phosphate. This is the penultimate step in the biosynthesis of riboflavin. This Agathobacter rectalis (strain ATCC 33656 / DSM 3377 / JCM 17463 / KCTC 5835 / VPI 0990) (Eubacterium rectale) protein is 6,7-dimethyl-8-ribityllumazine synthase.